The sequence spans 518 residues: MLCASFLGLGLSVAIVGPTFQDLATNVNRNISSLSFIFVGRALGYLSGSVIGGFLVDVMNYFLLLGISMSATTVGLYLVPFCKTAILLTVMMSIFGVSIGILDTGGNVLILAIWGDKGAPHMQALHFSFALGAFLAPLLAKLALGPTASAENHTESDFHPALNQSSDADSEALFGVPNDKNLLWAYAVIGTYMFLVSVIFFCLFLKNSSKQEKARASAETFRRAKYHNALLCLLFLFFFFYVGAEVTYGSYVFSFATTHAGMKESEAAGLNSIFWGTFAACRGLAIFFATCLQPGTMIVLSNIGSLTSSLFLVLFDKNPICLWIATSVYGASMATTFPSGVSWIEQYTTIHGKSAAFFVIGASLGEMAIPAVIGILQGKYPDLPVVLYTSLGASIATGILFPVLYKLATSPLDRQRKEDRKSEDQKALLSSSGLNEYEEENEEEDAEKWNEMDFEMIETNDTMRHSIIETSRSSLTEPTAEVYNQYPSNALVFESSPFNTGSAHVKHLPETRTKGTNV.

The next 12 membrane-spanning stretches (helical) occupy residues 19–39, 53–73, 82–102, 107–127, 139–159, 221–241, 307–327, 347–367, 376–396, 400–420, 438–458, and 466–486; these read TFQDLATNVNRNISSLSFIFV, GFLVDVMNYFLLLGISMSATT, CKTAILLTVMMSIFGVSIGIL, NVLILAIWGDKGAPHMQALHF, LAKLALGPTASAENHTESDFH, FRRAKYHNALLCLLFLFFFFY, TSSLFLVLFDKNPICLWIATS, YTTIHGKSAAFFVIGASLGEM, LQGKYPDLPVVLYTSLGASIA, LFPVLYKLATSPLDRQRKEDR, EEENEEEDAEKWNEMDFEMIE, and SIIETSRSSLTEPTAEVYNQY. Over residues 414 to 426 the composition is skewed to basic and acidic residues; it reads RQRKEDRKSEDQK. A disordered region spans residues 414 to 448; it reads RQRKEDRKSEDQKALLSSSGLNEYEEENEEEDAEK. Residues 436–448 are compositionally biased toward acidic residues; sequence EYEEENEEEDAEK.

The protein belongs to the major facilitator superfamily.

The protein localises to the apical cell membrane. Its function is as follows. May function as a sodium-dependent glucose transporter. Potential channels for urea in the inner medulla of kidney. The polypeptide is Sodium-dependent glucose transporter 1 (Homo sapiens (Human)).